The sequence spans 222 residues: Protein-L-isoaspartate O-methyltransferase (222 aa).

Residue serine 67 is part of the active site.

Belongs to the methyltransferase superfamily. L-isoaspartyl/D-aspartyl protein methyltransferase family.

Its subcellular location is the cytoplasm. It catalyses the reaction [protein]-L-isoaspartate + S-adenosyl-L-methionine = [protein]-L-isoaspartate alpha-methyl ester + S-adenosyl-L-homocysteine. Functionally, catalyzes the methyl esterification of L-isoaspartyl residues in peptides and proteins that result from spontaneous decomposition of normal L-aspartyl and L-asparaginyl residues. It plays a role in the repair and/or degradation of damaged proteins. The protein is Protein-L-isoaspartate O-methyltransferase of Parvibaculum lavamentivorans (strain DS-1 / DSM 13023 / NCIMB 13966).